The chain runs to 78 residues: 4-methyl-3-hydroxyanthranilic acid carrier protein (78 aa).

Serine 33 carries the post-translational modification O-(pantetheine 4'-phosphoryl)serine.

This sequence belongs to the acyl carrier protein (ACP) family. 4'-phosphopantetheine is transferred from CoA to a specific serine of the apo-form of this carrier protein.

It participates in antibiotic biosynthesis. Involved in the biosynthesis of actinomycin. Acts as a carrier in the transfer and thioesterification of 4-methyl-3-hydroxyanthranilic acid (4-MHA). The sequence is that of 4-methyl-3-hydroxyanthranilic acid carrier protein from Streptomyces anulatus (Streptomyces chrysomallus).